A 472-amino-acid polypeptide reads, in one-letter code: PEP-dependent dihydroxyacetone kinase, phosphoryl donor subunit DhaM (472 aa).

The PTS EIIA type-4 domain maps to 1 to 135; the sequence is MVNLVIVSHS…NALEAKRVQL (135 aa). The Tele-phosphohistidine intermediate role is filled by histidine 9. Residues 156-243 form the HPr domain; it reads ARSVSVVIQN…ALAAENFGEP (88 aa). Histidine 170 functions as the Pros-phosphohistidine intermediate in the catalytic mechanism. The interval 266–472 is PTS EI-like, N-terminal part; that stretch reads PQPQDRISRE…DIPGKRVIRG (207 aa). The active-site Tele-phosphohistidine intermediate is histidine 432.

Belongs to the PEP-utilizing enzyme family. Homodimer. The dihydroxyacetone kinase complex is composed of a homodimer of DhaM, a homodimer of DhaK and the subunit DhaL.

It carries out the reaction dihydroxyacetone + phosphoenolpyruvate = dihydroxyacetone phosphate + pyruvate. Its function is as follows. Component of the dihydroxyacetone kinase complex, which is responsible for the phosphoenolpyruvate (PEP)-dependent phosphorylation of dihydroxyacetone. DhaM serves as the phosphoryl donor. Is phosphorylated by phosphoenolpyruvate in an EI- and HPr-dependent reaction, and a phosphorelay system on histidine residues finally leads to phosphoryl transfer to DhaL and dihydroxyacetone. The sequence is that of PEP-dependent dihydroxyacetone kinase, phosphoryl donor subunit DhaM from Klebsiella michiganensis (strain ATCC 8724 / DSM 4798 / JCM 20051 / NBRC 3318 / NRRL B-199 / KCTC 1686 / BUCSAV 143 / CCM 1901).